Reading from the N-terminus, the 296-residue chain is uncharacterized protein (296 aa).

The protein to Synechocystis PCC 6803 sll0787 and M.jannaschii MJ0640.

This is an uncharacterized protein from Methanocaldococcus jannaschii (strain ATCC 43067 / DSM 2661 / JAL-1 / JCM 10045 / NBRC 100440) (Methanococcus jannaschii).